Consider the following 484-residue polypeptide: Suppressor of fused homolog (484 aa).

Positions 1 to 24 (MAELRPSGAPGPTAPPAPGPTAPP) are disordered. The segment covering 12–23 (PTAPPAPGPTAP) has biased composition (pro residues). Lys257 is covalently cross-linked (Glycyl lysine isopeptide (Lys-Gly) (interchain with G-Cter in ubiquitin)). The segment at 279–360 (SRPPEDDEDS…SSTAIIPHEL (82 aa)) is disordered. At Ser301 the chain carries Phosphoserine. Lys303 is subject to N6-acetyllysine. Lys321 participates in a covalent cross-link: Glycyl lysine isopeptide (Lys-Gly) (interchain with G-Cter in SUMO2). Basic and acidic residues predominate over residues 336–347 (AHDRAPSRKDSL). A phosphoserine mark is found at Ser342, Ser346, and Ser352. A Phosphothreonine modification is found at Thr353. The residue at position 481 (Ser481) is a Phosphoserine.

It belongs to the SUFU family. As to quaternary structure, may form homodimers. Part of a DNA-bound corepressor complex containing SAP18, GLI1 and SIN3. Part of a complex containing CTNNB1. Binds BTRC, GLI2, GLI3, SAP18 and STK36. Binds both free and DNA-bound GLI1. Interacts with KIF7. Interacts with GLI3FL and this interaction regulates the formation of either repressor or activator forms of GLI3. Its association with GLI3FL is regulated by Hh signaling and dissociation of the SUFU-GLI3 interaction requires the presence of the ciliary motor KIF3A. Interacts with ULK3; inactivating the protein kinase activity of ULK3. Interacts with RAB23. In terms of processing, polyubiquitinated at Lys-257 by the SCF(FBXL17) complex, leading to its subsequent degradation and allowing the release of GLI1 for proper hedgehog/smoothened signal transduction. Ubiquitination is impaired by phosphorylation at Ser-342, Ser-346, Ser-352 and Thr-353. Post-translationally, phosphorylation at Ser-342, Ser-346, Ser-352 and Thr-353 prevents ubiquitination by the SCF(FBXL17) complex. Ubiquitous in adult tissues. Detected in osteoblasts of the perichondrium in the developing limb of 12-week old embryos. Isoform 1 is detected in fetal brain, lung, kidney and testis. Isoform 2 is detected in fetal testis, and at much lower levels in fetal brain, lung and kidney.

The protein resides in the cytoplasm. It localises to the nucleus. In terms of biological role, negative regulator in the hedgehog/smoothened signaling pathway. Down-regulates GLI1-mediated transactivation of target genes. Down-regulates GLI2-mediated transactivation of target genes. Part of a corepressor complex that acts on DNA-bound GLI1. May also act by linking GLI1 to BTRC and thereby targeting GLI1 to degradation by the proteasome. Sequesters GLI1, GLI2 and GLI3 in the cytoplasm, this effect is overcome by binding of STK36 to both SUFU and a GLI protein. Negative regulator of beta-catenin signaling. Regulates the formation of either the repressor form (GLI3R) or the activator form (GLI3A) of the full-length form of GLI3 (GLI3FL). GLI3FL is complexed with SUFU in the cytoplasm and is maintained in a neutral state. Without the Hh signal, the SUFU-GLI3 complex is recruited to cilia, leading to the efficient processing of GLI3FL into GLI3R. When Hh signaling is initiated, SUFU dissociates from GLI3FL and the latter translocates to the nucleus, where it is phosphorylated, destabilized, and converted to a transcriptional activator (GLI3A). Required for normal embryonic development. Required for the proper formation of hair follicles and the control of epidermal differentiation. In Homo sapiens (Human), this protein is Suppressor of fused homolog.